A 341-amino-acid chain; its full sequence is MTLQDYIERATNGVDLSHETSRKAAKLLFEDATEAQIGALLTALRAKGETETEIAGFARGMRDAARTITPDRTPLVDTCGTGGDDYDTINISTTSAIVAAGAGAAVAKHGNYSVSSLSGSADVLSVAGADVKAEPPAVEAAIERDGIGFMLAPVFHPAMKAVIGPRKELGMRTIFNILGPLTNPAGADAQVIGVYDPDLVPVLGRALTQLPVERALVVHGSGMDEIALHDTTTVAEVIGDNVDGYTLSASSIGLDSAPVEAVAGGTPEENAADLRGIVTGETTGPKRDIILANAGAAIYVAGLADDIETGVEQAATAIDTGDAKATFETLCEPNSASTEQK.

5-phospho-alpha-D-ribose 1-diphosphate contacts are provided by residues G80, 83–84 (GD), T88, 90–93 (NIST), 108–116 (KHGNYSVSS), and S120. Residue G80 coordinates anthranilate. S92 contributes to the Mg(2+) binding site. N111 provides a ligand contact to anthranilate. Anthranilate is bound at residue R166. Mg(2+) contacts are provided by D224 and E225.

It belongs to the anthranilate phosphoribosyltransferase family. As to quaternary structure, homodimer. Mg(2+) serves as cofactor.

It catalyses the reaction N-(5-phospho-beta-D-ribosyl)anthranilate + diphosphate = 5-phospho-alpha-D-ribose 1-diphosphate + anthranilate. Its pathway is amino-acid biosynthesis; L-tryptophan biosynthesis; L-tryptophan from chorismate: step 2/5. Functionally, catalyzes the transfer of the phosphoribosyl group of 5-phosphorylribose-1-pyrophosphate (PRPP) to anthranilate to yield N-(5'-phosphoribosyl)-anthranilate (PRA). The chain is Anthranilate phosphoribosyltransferase from Haloquadratum walsbyi (strain DSM 16790 / HBSQ001).